The chain runs to 757 residues: MLSLLVWILTLSDTFSQGTQTRFSQEPADQTVVAGQRAVLPCVLLNYSGIVQWTKDGLALGMGQGLKAWPRYRVVGSADAGQYNLEITDAELSDDASYECQATEAALRSRRAKLTVLIPPEDTRIDGGPVILLQAGTPHNLTCRAFNAKPAATIIWFRDGTQQEGAVASTELLKDGKRETTVSQLLINPTDLDIGRVFTCRSMNEAIPSGKETSIELDVHHPPTVTLSIEPQTVQEGERVVFTCQATANPEILGYRWAKGGFLIEDAHESRYETNVDYSFFTEPVSCEVHNKVGSTNVSTLVNVHFAPRIVVDPKPTTTDIGSDVTLTCVWVGNPPLTLTWTKKDSNMVLSNSNQLLLKSVTQADAGTYTCRAIVPRIGVAEREVPLYVNGPPIISSEAVQYAVRGDGGKVECFIGSTPPPDRIAWAWKENFLEVGTLERYTVERTNSGSGVLSTLTINNVMEADFQTHYNCTAWNSFGPGTAIIQLEEREVLPVGIIAGATIGASILLIFFFIALVFFLYRRRKGSRKDVTLRKLDIKVETVNREPLTMHSDREDDTASVSTATRVMKAIYSSFKDDVDLKQDLRCDTIDTREEYEMKDPTNGYYNVRAHEDRPSSRAVLYADYRAPGPARFDGRPSSRLSHSSGYAQLNTYSRGPASDYGPEPTPPGPAAPAGTDTTSQLSYENYEKFNSHPFPGAAGYPTYRLGYPQAPPSGLERTPYEAYDPIGKYATATRFSYTSQHSDYGQRFQQRMQTHV.

The first 16 residues, 1–16 (MLSLLVWILTLSDTFS), serve as a signal peptide directing secretion. Residues 17-499 (QGTQTRFSQE…REVLPVGIIA (483 aa)) are Extracellular-facing. Ig-like C2-type domains are found at residues 21–115 (TRFS…AKLT), 120–216 (PEDT…TSIE), 223–299 (PTVT…TNVS), 308–387 (PRIV…EVPL), and 392–488 (PPII…IQLE). Cysteine 42 and cysteine 100 are oxidised to a cystine. N-linked (GlcNAc...) asparagine glycans are attached at residues asparagine 46 and asparagine 140. 2 disulfide bridges follow: cysteine 143–cysteine 200 and cysteine 244–cysteine 287. Residue asparagine 297 is glycosylated (N-linked (GlcNAc...) asparagine). Cysteine 329 and cysteine 371 are joined by a disulfide. Residues 405 to 407 (RGD) carry the Cell attachment site motif. Residues cysteine 413 and cysteine 472 are joined by a disulfide bond. Asparagine 471 is a glycosylation site (N-linked (GlcNAc...) asparagine). The chain crosses the membrane as a helical span at residues 500–520 (GATIGASILLIFFFIALVFFL). The Cytoplasmic portion of the chain corresponds to 521–757 (YRRRKGSRKD…RFQQRMQTHV (237 aa)). At serine 574 the chain carries Phosphoserine. Phosphotyrosine; by FYN occurs at positions 605 and 606. Phosphotyrosine is present on residues tyrosine 622 and tyrosine 625. The interval 649-679 (QLNTYSRGPASDYGPEPTPPGPAAPAGTDTT) is disordered. Tyrosine 724 is modified (phosphotyrosine).

The protein belongs to the immunoglobulin superfamily. As to quaternary structure, interacts with TJP1/ZO-1 and with NPHS2/podocin (via the C-terminus). Interacts with NPHS1/nephrin (via the Ig-like domains); this interaction is dependent on KIRREL1 glycosylation. Homodimer (via the Ig-like domains). Interacts when tyrosine-phosphorylated with GRB2. Post-translationally, phosphorylation probably regulates the interaction with NSH2. Phosphorylated at Tyr-605 and Tyr-606 by FYN, leading to GRB2 binding. N-glycosylated. In terms of tissue distribution, abundantly expressed in kidney. Specifically expressed in podocytes of kidney glomeruli.

It is found in the cell membrane. In terms of biological role, required for proper function of the glomerular filtration barrier. It is involved in the maintenance of a stable podocyte architecture with interdigitating foot processes connected by specialized cell-cell junctions, known as the slit diaphragm. It is a signaling protein that needs the presence of TEC kinases to fully trans-activate the transcription factor AP-1. This chain is Kin of IRRE-like protein 1, found in Homo sapiens (Human).